Here is a 368-residue protein sequence, read N- to C-terminus: Queuine tRNA-ribosyltransferase (368 aa).

Asp-89 functions as the Proton acceptor in the catalytic mechanism. Residues 89-93, Asp-143, Gln-187, and Gly-214 each bind substrate; that span reads DSGGF. The active-site Nucleophile is Asp-264. The tract at residues 269–273 is RNA binding; important for wobble base 34 recognition; the sequence is TRNAR. Positions 302, 304, 307, and 333 each coordinate Zn(2+).

The protein belongs to the queuine tRNA-ribosyltransferase family. In terms of assembly, homodimer. Within each dimer, one monomer is responsible for RNA recognition and catalysis, while the other monomer binds to the replacement base PreQ1. Requires Zn(2+) as cofactor.

The enzyme catalyses 7-aminomethyl-7-carbaguanine + guanosine(34) in tRNA = 7-aminomethyl-7-carbaguanosine(34) in tRNA + guanine. Its pathway is tRNA modification; tRNA-queuosine biosynthesis. Its function is as follows. Catalyzes the base-exchange of a guanine (G) residue with the queuine precursor 7-aminomethyl-7-deazaguanine (PreQ1) at position 34 (anticodon wobble position) in tRNAs with GU(N) anticodons (tRNA-Asp, -Asn, -His and -Tyr). Catalysis occurs through a double-displacement mechanism. The nucleophile active site attacks the C1' of nucleotide 34 to detach the guanine base from the RNA, forming a covalent enzyme-RNA intermediate. The proton acceptor active site deprotonates the incoming PreQ1, allowing a nucleophilic attack on the C1' of the ribose to form the product. After dissociation, two additional enzymatic reactions on the tRNA convert PreQ1 to queuine (Q), resulting in the hypermodified nucleoside queuosine (7-(((4,5-cis-dihydroxy-2-cyclopenten-1-yl)amino)methyl)-7-deazaguanosine). This is Queuine tRNA-ribosyltransferase from Blochmanniella pennsylvanica (strain BPEN).